We begin with the raw amino-acid sequence, 1736 residues long: Centrosomal protein of 152 kDa (1736 aa).

Residues M1–G60 are interaction with PLK4. Positions M1 to E127 are disordered. 2 stretches are compositionally biased toward basic and acidic residues: residues R61–P82 and E94–L105. Coiled coils occupy residues I228–G481, H552–D651, L692–Q776, A835–K868, N950–D1075, and G1205–R1315. Residues F571–T592 form a disordered region. Residues K575 to T592 show a composition bias toward basic and acidic residues. Residue T1277 is modified to Phosphothreonine. 4 disordered regions span residues G1416 to A1479, E1543 to P1562, G1574 to T1614, and Q1677 to E1736. Positions R1462–R1473 are enriched in basic and acidic residues. Composition is skewed to polar residues over residues P1576–S1595 and P1603–T1614. An N6-acetyllysine modification is found at K1714.

The protein belongs to the CEP152 family. As to quaternary structure, interacts (via N-terminus) with PLK4; the interaction is mutally exclusive with a PLK4:CEP192 interaction. Interacts (via C-terminus) with CPAP (via-N-terminus). Interacts with CINP. Interacts with CDK5RAP2, WDR62, CEP63 and CEP131. CEP63, CDK5RAP2, CEP152, WDR62 are proposed to form a stepwise assembled complex at the centrosome forming a ring near parental centrioles. Interacts with DEUP1; this interaction recruits CEP152 to the deuterosome. The interactions with CEP63 and DEUP1 are mutually exclusive. Interacts with CCDC66.

Its subcellular location is the cytoplasm. It localises to the cytoskeleton. It is found in the microtubule organizing center. The protein localises to the centrosome. The protein resides in the centriole. Functionally, necessary for centrosome duplication; the function also seems to involve CEP63, CDK5RAP2 and WDR62 through a stepwise assembled complex at the centrosome that recruits CDK2 required for centriole duplication. Acts as a molecular scaffold facilitating the interaction of PLK4 and CPAP, 2 molecules involved in centriole formation. Proposed to snatch PLK4 away from PLK4:CEP92 complexes in early G1 daughter centriole and to reposition PLK4 at the outer boundary of a newly forming CEP152 ring structure. Also plays a key role in deuterosome-mediated centriole amplification in multiciliated that can generate more than 100 centrioles. Overexpression of cep152 can drive amplification of centrioles. This is Centrosomal protein of 152 kDa (Cep152) from Mus musculus (Mouse).